A 237-amino-acid polypeptide reads, in one-letter code: Ribonuclease PH (237 aa).

Residues R86 and 124 to 126 (GTR) contribute to the phosphate site.

It belongs to the RNase PH family. As to quaternary structure, homohexameric ring arranged as a trimer of dimers.

The catalysed reaction is tRNA(n+1) + phosphate = tRNA(n) + a ribonucleoside 5'-diphosphate. In terms of biological role, phosphorolytic 3'-5' exoribonuclease that plays an important role in tRNA 3'-end maturation. Removes nucleotide residues following the 3'-CCA terminus of tRNAs; can also add nucleotides to the ends of RNA molecules by using nucleoside diphosphates as substrates, but this may not be physiologically important. Probably plays a role in initiation of 16S rRNA degradation (leading to ribosome degradation) during starvation. The sequence is that of Ribonuclease PH from Shewanella loihica (strain ATCC BAA-1088 / PV-4).